A 311-amino-acid polypeptide reads, in one-letter code: Malate dehydrogenase (311 aa).

NAD(+) contacts are provided by residues 7-13 (GAAGGIG) and Asp-34. Substrate is bound by residues Arg-81 and Arg-87. NAD(+) contacts are provided by residues Asn-94 and 117 to 119 (ITN). Asn-119 and Arg-153 together coordinate substrate. His-177 (proton acceptor) is an active-site residue. An NAD(+)-binding site is contributed by Met-227.

This sequence belongs to the LDH/MDH superfamily. MDH type 1 family. In terms of assembly, homodimer.

It catalyses the reaction (S)-malate + NAD(+) = oxaloacetate + NADH + H(+). Its function is as follows. Catalyzes the reversible oxidation of malate to oxaloacetate. In Shewanella amazonensis (strain ATCC BAA-1098 / SB2B), this protein is Malate dehydrogenase.